Consider the following 131-residue polypeptide: MAILGLGTDIVEISRIEAVISRSGERLARRVLSANEWAIWETHQQPVRFLAKRFAVKEAAAKAFGTGIRNGLAFNQFEVFNDELGKPRLRLWGEALTLAEKLGVTHMHVTLADERHYACATVILESQISAG.

2 residues coordinate Mg(2+): D9 and E58.

It belongs to the P-Pant transferase superfamily. AcpS family. The cofactor is Mg(2+).

Its subcellular location is the cytoplasm. The catalysed reaction is apo-[ACP] + CoA = holo-[ACP] + adenosine 3',5'-bisphosphate + H(+). Functionally, transfers the 4'-phosphopantetheine moiety from coenzyme A to a Ser of acyl-carrier-protein. In Salmonella arizonae (strain ATCC BAA-731 / CDC346-86 / RSK2980), this protein is Holo-[acyl-carrier-protein] synthase.